The primary structure comprises 287 residues: Neuferricin homolog (287 aa).

The first 22 residues, 1–22, serve as a signal peptide directing secretion; that stretch reads MFGLLRHLFKFQFLFVVAAVLG. A Cytochrome b5 heme-binding domain is found at 61–146; the sequence is GTLFTPAELA…KPDDLIGLAG (86 aa). Residues 175–204 adopt a coiled-coil conformation; sequence YHHKFLELLEQARDAKRQVEELRARYPGCN.

Belongs to the cytochrome b5 family. MAPR subfamily.

Its subcellular location is the secreted. Heme-binding protein. This Drosophila melanogaster (Fruit fly) protein is Neuferricin homolog.